Consider the following 430-residue polypeptide: uncharacterized protein (430 aa).

The next 2 membrane-spanning stretches (helical) occupy residues 20-40 (YLCLVFLAVYYAYPLLFGIMP) and 405-425 (YIWWALHISVCVLTILRLLVI).

It localises to the membrane. This is an uncharacterized protein from Schizosaccharomyces pombe (strain 972 / ATCC 24843) (Fission yeast).